We begin with the raw amino-acid sequence, 376 residues long: Arsenite methyltransferase (376 aa).

Residues serine 47 and serine 336 each carry the phosphoserine modification. The segment covering 354 to 363 has biased composition (basic and acidic residues); the sequence is SDKMKPRHAP. Residues 354 to 376 are disordered; it reads SDKMKPRHAPEGTGGCCGKRKNC.

It belongs to the methyltransferase superfamily. Arsenite methyltransferase family.

It is found in the cytoplasm. The protein localises to the cytosol. The catalysed reaction is arsenic triglutathione + [thioredoxin]-dithiol + S-adenosyl-L-methionine + 2 H2O = methylarsonous acid + [thioredoxin]-disulfide + 3 glutathione + S-adenosyl-L-homocysteine + H(+). The enzyme catalyses arsenic triglutathione + 2 [thioredoxin]-dithiol + 2 S-adenosyl-L-methionine + H2O = dimethylarsinous acid + 2 [thioredoxin]-disulfide + 3 glutathione + 2 S-adenosyl-L-homocysteine + 2 H(+). It catalyses the reaction arsenic triglutathione + 3 [thioredoxin]-dithiol + 3 S-adenosyl-L-methionine = trimethylarsine + 3 [thioredoxin]-disulfide + 3 glutathione + 3 S-adenosyl-L-homocysteine + 3 H(+). Catalyzes the transfer of a methyl group from AdoMet to trivalent arsenicals producing methylated and dimethylated arsenicals. It methylates arsenite to form methylarsonate, Me-AsO(3)H(2), which is reduced by methylarsonate reductase to methylarsonite, Me-As(OH)2. Methylarsonite is also a substrate and it is converted into the much less toxic compound dimethylarsinate (cacodylate), Me(2)As(O)-OH. In Mus musculus (Mouse), this protein is Arsenite methyltransferase (As3mt).